The chain runs to 340 residues: uncharacterized protein (340 aa).

The protein localises to the virion. This is an uncharacterized protein from Acanthamoeba polyphaga (Amoeba).